The following is a 243-amino-acid chain: Methylthioribulose-1-phosphate dehydratase (243 aa).

Cysteine 90 serves as a coordination point for substrate. Zn(2+) contacts are provided by histidine 108 and histidine 110. Glutamate 131 (proton donor/acceptor) is an active-site residue. Histidine 193 is a Zn(2+) binding site.

Belongs to the aldolase class II family. MtnB subfamily. It depends on Zn(2+) as a cofactor.

The protein resides in the cytoplasm. It carries out the reaction 5-(methylsulfanyl)-D-ribulose 1-phosphate = 5-methylsulfanyl-2,3-dioxopentyl phosphate + H2O. It participates in amino-acid biosynthesis; L-methionine biosynthesis via salvage pathway; L-methionine from S-methyl-5-thio-alpha-D-ribose 1-phosphate: step 2/6. Catalyzes the dehydration of methylthioribulose-1-phosphate (MTRu-1-P) into 2,3-diketo-5-methylthiopentyl-1-phosphate (DK-MTP-1-P). This chain is Methylthioribulose-1-phosphate dehydratase, found in Zygosaccharomyces rouxii (strain ATCC 2623 / CBS 732 / NBRC 1130 / NCYC 568 / NRRL Y-229).